The primary structure comprises 586 residues: MTVRLASVSISNFRSCKSTSAILRPFTALVGYNNAGKSNIILAIKWLLDGSLISESDVYDPTHPVSVEGVIQGITDDTLSLLTEENQQKIAPFIIDGTLTFARRQEFNKETGKAKKSLDVYDGTTWKKNPGGIDGAISNIFPEPIHIPAMSDAVEDSTKCKNTTTIGKILSAIVSEIKQEHEEKFSKNISEIGKYLSHNGENRLESLNKIDSGVNKKVNQFFPDVSVKLHFPTPTLDEIFKSGTLKVFESREDEPVMRDISRFGHGTQRSIQMALIQYLAEIKKENSESKKSNTLIFIDEPELYLHPSAINSVRESLVTLSESGYQVIISTHSASMLSAKHAANAIQVCKDSNGTIARKTISEKIEELYKSSSPQLHSAFTLSNSSYLLFSEEVLLVEGKTETNVLYALYKKINGHELNPSKICIVAVDGKGSLFKMSQIINAIGIKTRILADCDFLSNILLTEHKDLLSTECDNLLTALIESINSGELSLNTKVTTFESFKSISSKDFIKICNHEKTQKHIHEIHQKLKDNGIYIWKSGDIEAVYGFGKKQTEWDSLLDCLCDESKDVRAVIKKYDEMEDFIKWI.

Residues 1–163 (MTVRLASVSI…VEDSTKCKNT (163 aa)) are ATPase domain N-terminus. Position 34-38 (34-38 (NAGKS)) interacts with ATP. Positions 164-270 (TTIGKILSAI…SRFGHGTQRS (107 aa)) are dimerization domain. The segment at 271 to 390 (IQMALIQYLA…TLSNSSYLLF (120 aa)) is ATPase domain C-terminus. The segment at 393-586 (EVLLVEGKTE…DEMEDFIKWI (194 aa)) is toprim domain. The a divalent metal cation site is built by Glu398, Glu402, Asp453, Asp455, Asp541, and Glu543. Arg570 functions as the Stabilizes transition state or protonates leaving group in the catalytic mechanism.

It belongs to the class 1 OLD nuclease family. Mg(2+) serves as cofactor.

The catalysed reaction is Exonucleolytic cleavage in the 5'- to 3'-direction to yield nucleoside 5'-phosphates.. Functionally, an exonuclease that acts preferentially on linear dsDNA, processively degrading it from 5'-3', releasing 5'-phosphomononucleotides. Initiates on 5'-phosphate and 5'-hydroxyl ends. Also acts on linear ssDNA, nicked DNA and RNA. ATP enhances but is not necessary for exonuclease activity; has ATPase activity that is not stimulated by DNA. The old protein kills E.coli recB and recC mutants and interferes with phage lambda growth. Both the exonuclease and ATPase activities are required in vivo. Probably interferes with lambda phage by degrading its linear DNA. Isolated as a mutant able to lysogenize E.coli strain C cells normally not susceptible to lysis by phage P2. The polypeptide is Old nuclease (Enterobacteriaceae (Bacteriophage P2)).